A 387-amino-acid chain; its full sequence is MTSHPVFIDLSLDEQVQELRKYFKKLGAEISSEKSNKGVEDDLHKIIGVCDVCFKDGEPSQIDGILNSIVSIMITIPLDRGENIVLAYCEKMTKAPNQPLGKVCLQSLWRLFNNLDTASPLRYHVYYHLVQVAKQCEQVLEVFTGVDQLKTQFANCPPSSEQMQKLYRLLHDVTKDTNMELSSKVMIELLGTYTADNACVAREDAMKCIVTALADPNTFLLDPLLALKPVRFLEGDLIHDLLSIFVSDKLPSYVQFYEDHKEFVNSQGLNHEQNMKKMRLLTFMQLAESNPEMTFDTLTKELQITEDEVEPFVIQVLKTKLVRARLDQANRKVHISSTMHRTFGAPQWEQLRDLLQAWKENLSSVRDGLTNVSSAQLDLARTQKLIH.

In terms of domain architecture, PCI spans 181-340; sequence LSSKVMIELL…RKVHISSTMH (160 aa).

Belongs to the eIF-3 subunit M family. As to quaternary structure, component of the eukaryotic translation initiation factor 3 (eIF-3) complex. The eIF-3 complex interacts with pix.

It localises to the cytoplasm. The protein localises to the golgi apparatus. Functionally, component of the eukaryotic translation initiation factor 3 (eIF-3) complex, which is involved in protein synthesis of a specialized repertoire of mRNAs and, together with other initiation factors, stimulates binding of mRNA and methionyl-tRNAi to the 40S ribosome. The eIF-3 complex specifically targets and initiates translation of a subset of mRNAs involved in cell proliferation. This chain is Eukaryotic translation initiation factor 3 subunit M, found in Drosophila persimilis (Fruit fly).